The primary structure comprises 152 residues: D-aminoacyl-tRNA deacylase (152 aa).

The Gly-cisPro motif, important for rejection of L-amino acids motif lies at 142–143 (GP).

It belongs to the DTD family. In terms of assembly, homodimer.

The protein localises to the cytoplasm. The enzyme catalyses glycyl-tRNA(Ala) + H2O = tRNA(Ala) + glycine + H(+). The catalysed reaction is a D-aminoacyl-tRNA + H2O = a tRNA + a D-alpha-amino acid + H(+). Functionally, an aminoacyl-tRNA editing enzyme that deacylates mischarged D-aminoacyl-tRNAs. Also deacylates mischarged glycyl-tRNA(Ala), protecting cells against glycine mischarging by AlaRS. Acts via tRNA-based rather than protein-based catalysis; rejects L-amino acids rather than detecting D-amino acids in the active site. By recycling D-aminoacyl-tRNA to D-amino acids and free tRNA molecules, this enzyme counteracts the toxicity associated with the formation of D-aminoacyl-tRNA entities in vivo and helps enforce protein L-homochirality. This chain is D-aminoacyl-tRNA deacylase, found in Burkholderia ambifaria (strain ATCC BAA-244 / DSM 16087 / CCUG 44356 / LMG 19182 / AMMD) (Burkholderia cepacia (strain AMMD)).